We begin with the raw amino-acid sequence, 507 residues long: 2,3-bisphosphoglycerate-independent phosphoglycerate mutase (507 aa).

Residues Asp-13 and Ser-63 each contribute to the Mn(2+) site. Catalysis depends on Ser-63, which acts as the Phosphoserine intermediate. Substrate contacts are provided by residues His-122, 152–153, Arg-184, Arg-190, 256–259, and Lys-330; these read RD and RADR. Mn(2+) contacts are provided by Asp-397, His-401, Asp-438, His-439, and His-457.

The protein belongs to the BPG-independent phosphoglycerate mutase family. As to quaternary structure, monomer. Requires Mn(2+) as cofactor.

The catalysed reaction is (2R)-2-phosphoglycerate = (2R)-3-phosphoglycerate. It functions in the pathway carbohydrate degradation; glycolysis; pyruvate from D-glyceraldehyde 3-phosphate: step 3/5. Catalyzes the interconversion of 2-phosphoglycerate and 3-phosphoglycerate. This is 2,3-bisphosphoglycerate-independent phosphoglycerate mutase from Chromobacterium violaceum (strain ATCC 12472 / DSM 30191 / JCM 1249 / CCUG 213 / NBRC 12614 / NCIMB 9131 / NCTC 9757 / MK).